The primary structure comprises 369 residues: MNTQSQTIVVKLGTSVLTGGTLKLDRAHMVELVRQCVQLKKAGHQVIVVTSGAIAAGREHLNYPELPKTMANKQLLAAVGQSCLIQAWQSLFGIYGVDVGQMLLTRADLDDRERYLNARDMLQALLKNNIVPIVNENDAVATNEIKVGDNDNLSALVGILAGADKLLLLTDQSGLFTADPRKDPKAELIKEVHTIDETLRKIAGGSGTTLGTGGMATKLQAADVARRAGIEVIIAAGSAENVITDVVNSKPQGTKFLPVECALESRKRWILAGPPSKGSIVIDEGAVNAVQQKGSSLLSKGITEVSGHFVRGGVAKIVNTKGELIARGISRYSSDDLSKILGKHSQDIYAVLGYEYGPVAIHRDDLVLI.

An ATP-binding site is contributed by lysine 11. The substrate site is built by serine 51, aspartate 138, and asparagine 150. Residues 170 to 171 (TD) and 212 to 218 (TGGMATK) contribute to the ATP site. Positions 277–355 (KGSIVIDEGA…QDIYAVLGYE (79 aa)) constitute a PUA domain.

The protein belongs to the glutamate 5-kinase family.

It localises to the cytoplasm. The enzyme catalyses L-glutamate + ATP = L-glutamyl 5-phosphate + ADP. Its pathway is amino-acid biosynthesis; L-proline biosynthesis; L-glutamate 5-semialdehyde from L-glutamate: step 1/2. Catalyzes the transfer of a phosphate group to glutamate to form L-glutamate 5-phosphate. In Aliivibrio fischeri (strain ATCC 700601 / ES114) (Vibrio fischeri), this protein is Glutamate 5-kinase.